Reading from the N-terminus, the 605-residue chain is Pyruvate decarboxylase 1 (605 aa).

Substrate-binding residues include D67 and H154. The thiamine pyrophosphate binding stretch occupies residues D432–I514. The Mg(2+) site is built by D482, N509, and G511. E515 contacts substrate.

The protein belongs to the TPP enzyme family. In terms of assembly, homotetramer. It depends on a metal cation as a cofactor. Thiamine diphosphate is required as a cofactor.

It catalyses the reaction a 2-oxocarboxylate + H(+) = an aldehyde + CO2. The sequence is that of Pyruvate decarboxylase 1 (PDC1) from Oryza sativa subsp. indica (Rice).